Reading from the N-terminus, the 232-residue chain is Endonuclease NucS (232 aa).

It belongs to the NucS endonuclease family.

It localises to the cytoplasm. Cleaves both 3' and 5' ssDNA extremities of branched DNA structures. In Mycobacteroides abscessus (strain ATCC 19977 / DSM 44196 / CCUG 20993 / CIP 104536 / JCM 13569 / NCTC 13031 / TMC 1543 / L948) (Mycobacterium abscessus), this protein is Endonuclease NucS.